A 573-amino-acid chain; its full sequence is Globulin-1 S allele (573 aa).

Residues 1-18 (MVSARIVVLLAVLLCAAA) constitute a signal peptide (or 21). A propeptide spanning residues 19 to 86 (AVASSWEDDN…DRSGEGSSED (68 aa)) is cleaved from the precursor. Positions 65–102 (EKRQERSRHEADDRSGEGSSEDEREREQEKEEKQKDRR) are disordered. Cupin type-1 domains lie at 104–262 (YVFD…DRLE) and 311–493 (YSLL…EEVD). The interval 288–315 (RHASEGGHGPHWPLPPFGESRGPYSLLD) is disordered. N349 carries an N-linked (GlcNAc...) asparagine glycan. 2 disordered regions span residues 382–416 (PHRQ…EVGQ) and 498–573 (SRRE…TARM). A compositionally biased stretch (basic and acidic residues) spans 390-402 (ESERERGKGRRSE). A compositionally biased stretch (acidic residues) spans 403–413 (EEEESSEEQEE). 2 stretches are compositionally biased toward basic and acidic residues: residues 525-542 (EERH…REER) and 549-561 (REGR…REEV).

Belongs to the 7S seed storage protein family. Post-translationally, three protein-processing steps occur in the formation of the mature protein from the primary translation product.

This Zea mays (Maize) protein is Globulin-1 S allele (GLB1).